We begin with the raw amino-acid sequence, 85 residues long: Large ribosomal subunit protein bL27 (85 aa).

The disordered stretch occupies residues 1–20 (MAHKKAGGSTRNGRDSEAKR).

Belongs to the bacterial ribosomal protein bL27 family.

This is Large ribosomal subunit protein bL27 from Escherichia coli O139:H28 (strain E24377A / ETEC).